Consider the following 196-residue polypeptide: DnaA initiator-associating protein DiaA (196 aa).

Positions 34–196 (LVHSLLNGNK…DNTLFPHQDD (163 aa)) constitute an SIS domain.

This sequence belongs to the SIS family. DiaA subfamily. In terms of assembly, homotetramer; dimer of dimers.

Functionally, required for the timely initiation of chromosomal replication via direct interactions with the DnaA initiator protein. The protein is DnaA initiator-associating protein DiaA of Salmonella enteritidis PT4 (strain P125109).